The following is a 253-amino-acid chain: UPF0246 protein Swit_4565 (253 aa).

It belongs to the UPF0246 family.

This Rhizorhabdus wittichii (strain DSM 6014 / CCUG 31198 / JCM 15750 / NBRC 105917 / EY 4224 / RW1) (Sphingomonas wittichii) protein is UPF0246 protein Swit_4565.